Consider the following 235-residue polypeptide: Small ribosomal subunit protein eS4 (235 aa).

One can recognise an S4 RNA-binding domain in the interval 37-110 (LPLGLIIRDV…KGRLVLYKLN (74 aa)).

The protein belongs to the eukaryotic ribosomal protein eS4 family.

In Methanosarcina mazei (strain ATCC BAA-159 / DSM 3647 / Goe1 / Go1 / JCM 11833 / OCM 88) (Methanosarcina frisia), this protein is Small ribosomal subunit protein eS4.